The chain runs to 102 residues: Small ribosomal subunit protein uS10 (102 aa).

The protein belongs to the universal ribosomal protein uS10 family. Part of the 30S ribosomal subunit.

Involved in the binding of tRNA to the ribosomes. The sequence is that of Small ribosomal subunit protein uS10 from Acidiphilium cryptum (strain JF-5).